A 237-amino-acid chain; its full sequence is Phosphoribosylaminoimidazole-succinocarboxamide synthase (237 aa).

The protein belongs to the SAICAR synthetase family.

The enzyme catalyses 5-amino-1-(5-phospho-D-ribosyl)imidazole-4-carboxylate + L-aspartate + ATP = (2S)-2-[5-amino-1-(5-phospho-beta-D-ribosyl)imidazole-4-carboxamido]succinate + ADP + phosphate + 2 H(+). Its pathway is purine metabolism; IMP biosynthesis via de novo pathway; 5-amino-1-(5-phospho-D-ribosyl)imidazole-4-carboxamide from 5-amino-1-(5-phospho-D-ribosyl)imidazole-4-carboxylate: step 1/2. The protein is Phosphoribosylaminoimidazole-succinocarboxamide synthase of Photorhabdus laumondii subsp. laumondii (strain DSM 15139 / CIP 105565 / TT01) (Photorhabdus luminescens subsp. laumondii).